The primary structure comprises 241 residues: Small ribosomal subunit protein uS2 (241 aa).

This sequence belongs to the universal ribosomal protein uS2 family.

This is Small ribosomal subunit protein uS2 from Shigella flexneri serotype 5b (strain 8401).